The sequence spans 565 residues: Phospholipase B-like protein C (565 aa).

Residues 1–21 form the signal peptide; sequence MNKIIILISLFLNFLFGYVVC. Residues Asn-53, Asn-84, Asn-118, Asn-200, Asn-201, Asn-211, Asn-266, Asn-302, Asn-406, and Asn-485 are each glycosylated (N-linked (GlcNAc...) asparagine).

The protein belongs to the phospholipase B-like family.

The protein localises to the secreted. Probable phospholipase. The sequence is that of Phospholipase B-like protein C (plbC) from Dictyostelium discoideum (Social amoeba).